A 2234-amino-acid polypeptide reads, in one-letter code: MDESVSSLFDLLRKHFPAKEEISRQITVVTSQTEMRMILTEGFKLLSLLIELDSCEVNNCSHNKEDLTVEAILSKDNILTIALPRIVPDGYSLYGNVLILLETFVRVNPSSFEQKYNQDMNKLLSLKNDLQLCGITLVPLVDGRTNYYNKFVDDWVIERFRWLLTQIMKVAKESGESIEELEYQRLVTSLSKLENQSLGFENIIKMPQTGIDYRDKLKARMFANLSNKMKESEINQSLLSLKLAFDEAYNDESHLKKFQKTNKEDLIFKLGQQINLSDEKLSCMSCSSKLFSIVSSITQNRDKLDSHVMSVSNAKLWHHESGIANVNEYLRILSVCNKIKSAKILNTRRNTLLFLDMIVLNFIDDCWKNDPTILFQFKKSGLLVGQLAYFVNDRFFDLLLLKELLSKKLKSSPDWIHRCLCNIRKQEFFDISGVEFWIRQPDYESVEELCCALEPVKPKLQYCRDEDNHENHKLDLADKDNYFTCLSVLSSVCLGLVNSMKTSFTSKMVINEKSPNNFYGEVELKECYCQRFYVSDEITGLLFYQKTGEKSRCYSIGVTMHGSYKYIGSFYCDPKRFFLPIFSQVVLFQMTEEMMSWLPEEPSYKEPVVANLRKLILMLLCNPSKRNQNFLQGMRYFIMAYVNQFHSVELMSKLEVPCKSVSEECVQKLTYNLLVDVLTKGDVNEHMTRKFKFCLNVSYLCHLITKETPDRLTDQIKCFEKFLEPKLKFKSVIINPNLTGDLTEEQEEQLLNSIEKLLGKGLQDINDSSEPGISRELLSMCISAFNRDLLRVNGKLKNDPYKPNFTSTALDLSSNKSVVIPKLDELGNPISKYDYELLVSSCIASMAESFKTKGKYKLDPTSQEFLILKNLYSLMSKSKRDDHMKDSEDSKQNLSSDLENLSEEQVLILEQVKRDVNLALSKMRETKLKEKTEARQSSSGSSLKNQQKRQAELQERLSELWSEFMCMKIITVEVSLHEIKDFDPDLIDHTTLKSMLDKLYNSDLASEFFLEEILNPCPLEFLVKNMTTSSYLEGDLFECFKYTLISAGFDQKLGTYEHKNKTRLGFKYEALKVREEGRMSLRESNSEAIARRLDRSVFSNSALRNLCFYSDESPISYSHVSSDTGKLKFGLSYKEQVGSNRELYVGDLNTKLMTRLIEDFSESVVSNMNYSCLNSEKEFERSVMEMKMSVNLGEMNFSLDHSKWGPYMSPVIFAAFLQGLKLEQGSMCTPVSVEPIITLLSWHIHKVVEVPYNVIHAYMTGMIKRQLGLMSPGESSKTEAFIHRLLVDEREPLSHVMSVLDMGQGILHNTSDLYGLVTEQFINYAMRILYDVSMTSFTSSDDQITMVKLNEDLKDMDNPEVISNWERMINFHTFISSKFNKFVSPKTVIGTFAAEFKSRFFVWGEEVPLLTKFVSAALHNIKCKTPIQLSETIDTISDQCVANGVSVEIVSCISNRTNKLVRYSGFPDNPFLSVENMDVKDWVDGNRGYRLQRNIESHLEVDGCTRFVRQAARKVFRNIKSGKIMEQTLVNLVQEDGDKAFQGFMKSVDVSDDDIKLLQNFRWINLSTHGDMRLVLRTKLMSSRRIIEQEEIPGLIKSIQSKLSKNFVRGAKRILADSINKSAFQSSIASGFIGFCKSMGSKCVRLGGGGFGYIKDIKNKVKHDCLCDICFRWRGCVYCPSSCADVFEFSRPLMWDYFTLVLTNACELGEWVFEDVEIPKDLYFLRNPNLFWLVKPRVTCQLEERLGLSHILQSIRKNYPTLFETHLSPFMSDFMVGKTLGSLTVKFLDLCVALDLANENLGITKHFLKERRHEIYVVKQDESSQSHIRNVKGIESSVELNSMQVCNNFLTQLLMSSFIQPLVLTSSVFKKFNWFAEVLCLKTEEEVCLKQLTDFVLQVKKFNVDRAMHIEDLSAGYISSTINVTSFSLSVPTFLECVDSDFINKEGNEPGDFKDLLSSEFTKDTLTLDFCIQVSHIKRSVKFNVKRTLVYTLAVRTQIEKKIILEAIGTDDQISLIVSELDLFCSGHTGNHFVLDAAPLIYSEPLIAGSLKFDLLSMLRDQELSLTSSEKMPTFNFDFSSQKHHIVNKFAYKLVGPSVYDEPLVLNKGIVYSGERKLTSLGVDVSGERIVQAMGELDSISEQELFLTNLWGYSKETDIKVRIIQDNLKILTDNYFVQLKNSLKTFAEWLNLGNYMLCYSKTLDTIMISDVSGRIKLKGVICRKLIEDEVMEVE.

Positions 26–283 (ITVVTSQTEM…INLSDEKLSC (258 aa)) are endonuclease. Mn(2+) is bound by residues glutamate 51, aspartate 89, and glutamate 102. Residue lysine 115 is part of the active site. Basic and acidic residues predominate over residues 879 to 891 (KRDDHMKDSEDSK). Disordered regions lie at residues 879–898 (KRDDHMKDSEDSKQNLSSDL) and 927–949 (KLKEKTEARQSSSGSSLKNQQKR). The segment covering 935–945 (RQSSSGSSLKN) has biased composition (polar residues). A RdRp catalytic domain is found at 1184–1383 (MEMKMSVNLG…FISSKFNKFV (200 aa)). Aspartate 1342 is a binding site for Mg(2+).

This sequence belongs to the Bunyavirales RNA polymerase family. In terms of assembly, homomultimer; the oligomeric structure is essential for the polymerase activity. Interacts with nucleoprotein N. Interacts with protein Z; this interaction inhibits viral transcription and replication, Z partially blocks the product exit tunnel for the releasing nascent RNA product. Mn(2+) is required as a cofactor. Requires Mg(2+) as cofactor.

It is found in the virion. The protein localises to the host cytoplasm. The catalysed reaction is RNA(n) + a ribonucleoside 5'-triphosphate = RNA(n+1) + diphosphate. Functionally, RNA-dependent RNA polymerase, which is responsible for the replication and transcription of the viral RNA genome using antigenomic RNA as an intermediate. During transcription, synthesizes subgenomic RNAs and assures their capping by a cap-snatching mechanism, which involves the endonuclease activity cleaving the host capped pre-mRNAs. These short capped RNAs are then used as primers for viral transcription. The 3'-end of subgenomic mRNAs molecules are heterogeneous and not polyadenylated. The replicase function is to direct synthesis of antigenomic and genomic RNA which are encapsidated and non capped. As a consequence of the use of the same enzyme for both transcription and replication, these mechanisms need to be well coordinated. These processes may be regulated by proteins N and Z in a dose-dependent manner. Z protein inhibits the viral polymerase L und thus the viral transcription and RNA synthesis. This Bolomys (OLVV) protein is RNA-directed RNA polymerase L.